Reading from the N-terminus, the 76-residue chain is Protein krueppel (76 aa).

2 consecutive C2H2-type zinc fingers follow at residues 11–33 and 39–61; these read FECS…LRLH and YSCP…LRVH.

This sequence belongs to the krueppel C2H2-type zinc-finger protein family.

It localises to the nucleus. Its function is as follows. Krueppel is a gap class segmentation protein. This is Protein krueppel (Kr) from Manduca sexta (Tobacco hawkmoth).